We begin with the raw amino-acid sequence, 318 residues long: Ribonuclease Z (318 aa).

The Zn(2+) site is built by His62, His64, Asp66, His67, His139, Asp210, and His268. Asp66 acts as the Proton acceptor in catalysis.

This sequence belongs to the RNase Z family. In terms of assembly, homodimer. Requires Zn(2+) as cofactor.

The catalysed reaction is Endonucleolytic cleavage of RNA, removing extra 3' nucleotides from tRNA precursor, generating 3' termini of tRNAs. A 3'-hydroxy group is left at the tRNA terminus and a 5'-phosphoryl group is left at the trailer molecule.. Zinc phosphodiesterase, which displays some tRNA 3'-processing endonuclease activity. Probably involved in tRNA maturation, by removing a 3'-trailer from precursor tRNA. This Gloeothece citriformis (strain PCC 7424) (Cyanothece sp. (strain PCC 7424)) protein is Ribonuclease Z.